Consider the following 85-residue polypeptide: Large ribosomal subunit protein bL27 (85 aa).

The disordered stretch occupies residues 1 to 22 (MAHKKAGGSTNNGRDSESKRLG).

It belongs to the bacterial ribosomal protein bL27 family.

The sequence is that of Large ribosomal subunit protein bL27 from Psychromonas ingrahamii (strain DSM 17664 / CCUG 51855 / 37).